Reading from the N-terminus, the 204-residue chain is Guanylate kinase (204 aa).

Positions 4–182 (GMLVVVSGPS…AVNDLEAVLT (179 aa)) constitute a Guanylate kinase-like domain. Position 11 to 18 (11 to 18 (GPSGAGKG)) interacts with ATP.

Belongs to the guanylate kinase family.

Its subcellular location is the cytoplasm. The enzyme catalyses GMP + ATP = GDP + ADP. Essential for recycling GMP and indirectly, cGMP. This Carboxydothermus hydrogenoformans (strain ATCC BAA-161 / DSM 6008 / Z-2901) protein is Guanylate kinase.